We begin with the raw amino-acid sequence, 306 residues long: Aspartate carbamoyltransferase catalytic subunit (306 aa).

Arg55 and Thr56 together coordinate carbamoyl phosphate. Lys84 is an L-aspartate binding site. Residues Arg105, His133, and Gln136 each contribute to the carbamoyl phosphate site. L-aspartate-binding residues include Arg166 and Arg227. Positions 265 and 266 each coordinate carbamoyl phosphate.

The protein belongs to the aspartate/ornithine carbamoyltransferase superfamily. ATCase family. Heterododecamer (2C3:3R2) of six catalytic PyrB chains organized as two trimers (C3), and six regulatory PyrI chains organized as three dimers (R2).

The enzyme catalyses carbamoyl phosphate + L-aspartate = N-carbamoyl-L-aspartate + phosphate + H(+). It functions in the pathway pyrimidine metabolism; UMP biosynthesis via de novo pathway; (S)-dihydroorotate from bicarbonate: step 2/3. In terms of biological role, catalyzes the condensation of carbamoyl phosphate and aspartate to form carbamoyl aspartate and inorganic phosphate, the committed step in the de novo pyrimidine nucleotide biosynthesis pathway. The protein is Aspartate carbamoyltransferase catalytic subunit of Neisseria gonorrhoeae (strain NCCP11945).